The following is a 166-amino-acid chain: 3-isopropylmalate dehydratase small subunit (166 aa).

This sequence belongs to the LeuD family. LeuD type 2 subfamily. In terms of assembly, heterodimer of LeuC and LeuD.

The catalysed reaction is (2R,3S)-3-isopropylmalate = (2S)-2-isopropylmalate. It participates in amino-acid biosynthesis; L-leucine biosynthesis; L-leucine from 3-methyl-2-oxobutanoate: step 2/4. Functionally, catalyzes the isomerization between 2-isopropylmalate and 3-isopropylmalate, via the formation of 2-isopropylmaleate. The sequence is that of 3-isopropylmalate dehydratase small subunit from Aliarcobacter butzleri (strain RM4018) (Arcobacter butzleri).